The chain runs to 213 residues: Serine acetyltransferase (213 aa).

This sequence belongs to the transferase hexapeptide repeat family.

It localises to the cytoplasm. The catalysed reaction is L-serine + acetyl-CoA = O-acetyl-L-serine + CoA. It participates in amino-acid biosynthesis; L-cysteine biosynthesis; L-cysteine from L-serine: step 1/2. The polypeptide is Serine acetyltransferase (cysE) (Staphylococcus aureus (strain COL)).